The primary structure comprises 578 residues: Proline--tRNA ligase (578 aa).

This sequence belongs to the class-II aminoacyl-tRNA synthetase family. ProS type 1 subfamily. In terms of assembly, homodimer.

The protein localises to the cytoplasm. The enzyme catalyses tRNA(Pro) + L-proline + ATP = L-prolyl-tRNA(Pro) + AMP + diphosphate. Functionally, catalyzes the attachment of proline to tRNA(Pro) in a two-step reaction: proline is first activated by ATP to form Pro-AMP and then transferred to the acceptor end of tRNA(Pro). As ProRS can inadvertently accommodate and process non-cognate amino acids such as alanine and cysteine, to avoid such errors it has two additional distinct editing activities against alanine. One activity is designated as 'pretransfer' editing and involves the tRNA(Pro)-independent hydrolysis of activated Ala-AMP. The other activity is designated 'posttransfer' editing and involves deacylation of mischarged Ala-tRNA(Pro). The misacylated Cys-tRNA(Pro) is not edited by ProRS. This chain is Proline--tRNA ligase, found in Burkholderia orbicola (strain AU 1054).